Here is a 165-residue protein sequence, read N- to C-terminus: V-type proton ATPase subunit c2 (165 aa).

Over 1–12 (MASTFSGDETAP) the chain is Lumenal. A helical membrane pass occupies residues 13–33 (FFGFLGAAAALVFSCMGAAYG). Topologically, residues 34-55 (TAKSGVGVASMGVMRPELVMKS) are cytoplasmic. Residues 56 to 76 (IVPVVMAGVLGIYGLIIAVII) traverse the membrane as a helical segment. Residues 77-95 (STGINPKAKSYYLFDGYAH) lie on the Lumenal side of the membrane. Residues 96 to 117 (LSSGLACGLAGLSAGMAIGIVG) form a helical membrane-spanning segment. Residues 118-129 (DAGVRANAQQPK) lie on the Cytoplasmic side of the membrane. Residues 130-155 (LFVGMILILIFAEALALYGLIVGIIL) traverse the membrane as a helical segment. At 156–165 (SSRAGQSRAE) the chain is on the lumenal side.

Belongs to the V-ATPase proteolipid subunit family. As to quaternary structure, V-ATPase is a heteromultimeric enzyme composed of a peripheral catalytic V1 complex (components A to H) attached to an integral membrane V0 proton pore complex (components: a, c, c'', d and e). The proteolipid components c and c'' are present as a hexameric ring that forms the proton-conducting pore. Expressed in leaf, root, flower and silique, with lower expression in roots.

Its subcellular location is the vacuole membrane. Functionally, proton-conducting pore forming subunit of the membrane integral V0 complex of vacuolar ATPase. V-ATPase is responsible for acidifying a variety of intracellular compartments in eukaryotic cells. The sequence is that of V-type proton ATPase subunit c2 (VHA-c2) from Arabidopsis thaliana (Mouse-ear cress).